We begin with the raw amino-acid sequence, 517 residues long: tRNA-2-methylthio-N(6)-dimethylallyladenosine synthase (517 aa).

The MTTase N-terminal domain occupies 18–137 (RTYQVRTYGC…LPTLLDRARH (120 aa)). [4Fe-4S] cluster is bound by residues Cys-27, Cys-66, Cys-100, Cys-174, Cys-178, and Cys-181. The Radical SAM core domain occupies 160-397 (RESDYAAWVS…ELQEQICMEE (238 aa)). Residues 399 to 470 (RVLIGRIVEL…PHHLIADAGI (72 aa)) form the TRAM domain.

It belongs to the methylthiotransferase family. MiaB subfamily. As to quaternary structure, monomer. It depends on [4Fe-4S] cluster as a cofactor.

It is found in the cytoplasm. The enzyme catalyses N(6)-dimethylallyladenosine(37) in tRNA + (sulfur carrier)-SH + AH2 + 2 S-adenosyl-L-methionine = 2-methylsulfanyl-N(6)-dimethylallyladenosine(37) in tRNA + (sulfur carrier)-H + 5'-deoxyadenosine + L-methionine + A + S-adenosyl-L-homocysteine + 2 H(+). Functionally, catalyzes the methylthiolation of N6-(dimethylallyl)adenosine (i(6)A), leading to the formation of 2-methylthio-N6-(dimethylallyl)adenosine (ms(2)i(6)A) at position 37 in tRNAs that read codons beginning with uridine. The protein is tRNA-2-methylthio-N(6)-dimethylallyladenosine synthase of Mycobacterium leprae (strain TN).